The sequence spans 286 residues: 2,3,4,5-tetrahydropyridine-2,6-dicarboxylate N-succinyltransferase (286 aa).

Substrate-binding residues include R109 and D146.

The protein belongs to the transferase hexapeptide repeat family. Homotrimer.

It localises to the cytoplasm. It catalyses the reaction (S)-2,3,4,5-tetrahydrodipicolinate + succinyl-CoA + H2O = (S)-2-succinylamino-6-oxoheptanedioate + CoA. Its pathway is amino-acid biosynthesis; L-lysine biosynthesis via DAP pathway; LL-2,6-diaminopimelate from (S)-tetrahydrodipicolinate (succinylase route): step 1/3. The polypeptide is 2,3,4,5-tetrahydropyridine-2,6-dicarboxylate N-succinyltransferase (Bartonella tribocorum (strain CIP 105476 / IBS 506)).